Consider the following 88-residue polypeptide: Acylphosphatase (88 aa).

The region spanning 3–88 is the Acylphosphatase-like domain; the sequence is AVDVLISGRV…RAGHQGFEVR (86 aa). Active-site residues include R18 and N36.

This sequence belongs to the acylphosphatase family.

The catalysed reaction is an acyl phosphate + H2O = a carboxylate + phosphate + H(+). The sequence is that of Acylphosphatase (acyP) from Methanocella arvoryzae (strain DSM 22066 / NBRC 105507 / MRE50).